A 166-amino-acid polypeptide reads, in one-letter code: MAKQDVQNGEFLEKLIAVNRVSKVVKGGRIFSFTALTVVGDGNGRVGFGYGKAREVPAAIQKAMEKARRNMVDVDLNGHTLQHPIKGRHSGSKVYMQPASEGTGIIAGGAMRAVLEVAGVQNVLSKCYGSTNPINVVRATINALTEMNSPAKVAAKRGLSVEEILG.

An S5 DRBM domain is found at 11–74; the sequence is FLEKLIAVNR…EKARRNMVDV (64 aa).

Belongs to the universal ribosomal protein uS5 family. In terms of assembly, part of the 30S ribosomal subunit. Contacts proteins S4 and S8.

In terms of biological role, with S4 and S12 plays an important role in translational accuracy. Its function is as follows. Located at the back of the 30S subunit body where it stabilizes the conformation of the head with respect to the body. The protein is Small ribosomal subunit protein uS5 of Alteromonas mediterranea (strain DSM 17117 / CIP 110805 / LMG 28347 / Deep ecotype).